We begin with the raw amino-acid sequence, 71 residues long: Delta-actitoxin-Avd2b 4 (71 aa).

Positions 1 to 20 (MMNRLLVFLMLGAFMLVVSA) are cleaved as a signal peptide. Positions 21–41 (NDAYGDEPAFKDLNQGDESLG) are excised as a propeptide. Cystine bridges form between Cys46-Cys61, Cys47-Cys55, and Cys49-Cys66.

The protein belongs to the sea anemone short toxin (type III) family.

It localises to the secreted. Its subcellular location is the nematocyst. Its function is as follows. Voltage-gated sodium channel (Nav) inhibitor. 1 uM completely inhibits insect voltage-gated sodium channel inactivation (DmNav1 from D.melanogaster). The sequence is that of Delta-actitoxin-Avd2b 4 from Anemonia viridis (Snakelocks anemone).